Consider the following 461-residue polypeptide: Cysteine--tRNA ligase (461 aa).

Position 28 (Cys28) interacts with Zn(2+). Residues 30–40 (VTIYDLCHIGH) carry the 'HIGH' region motif. Cys209, His234, and Glu238 together coordinate Zn(2+). Residues 266-270 (KMSKS) carry the 'KMSKS' region motif. Residue Lys269 coordinates ATP.

Belongs to the class-I aminoacyl-tRNA synthetase family. Monomer. Requires Zn(2+) as cofactor.

The protein localises to the cytoplasm. The catalysed reaction is tRNA(Cys) + L-cysteine + ATP = L-cysteinyl-tRNA(Cys) + AMP + diphosphate. This Serratia proteamaculans (strain 568) protein is Cysteine--tRNA ligase.